The chain runs to 548 residues: WAP, Kazal, immunoglobulin, Kunitz and NTR domain-containing protein 1 (548 aa).

The N-terminal stretch at 1–19 (MPALRPLLPLLLLLRLTSG) is a signal peptide. Residues 26–79 (LGSHPGVCPNQLSPNLWVDAQSTCERECSRDQDCAAAEKCCINVCGLHSCVAAR) enclose the WAP domain. 7 disulfides stabilise this stretch: C33–C66, C49–C70, C53–C65, C59–C75, C116–C146, C120–C139, and C128–C157. One can recognise a Kazal-like domain in the interval 108-159 (WDGQPVCRCRDRCEKEPSFTCASDGLTYYNRCYMDAEACLRGLHLHIVPCKH). The tract at residues 164 to 184 (PPSSPGPPETTARPTPGAAPV) is disordered. Positions 186–279 (PALYSSPSPQ…GLLRADFPLS (94 aa)) constitute an Ig-like C2-type domain. 10 disulfide bridges follow: C207–C263, C299–C351, C306–C334, C326–C347, C359–C409, C368–C392, C384–C405, C417–C489, C420–C491, and C431–C540. 2 consecutive BPTI/Kunitz inhibitor domains span residues 299-351 (CLPD…QQAC) and 359-409 (CVLP…EDAC). In terms of domain architecture, NTR spans 409-540 (CPVPRTPPCR…ILELLEKQAC (132 aa)). Residue N493 is glycosylated (N-linked (GlcNAc...) asparagine).

It belongs to the WFIKKN family. In terms of tissue distribution, expressed in pancreas, kidney, liver, placenta, and lung.

It localises to the secreted. Its function is as follows. Protease-inhibitor that contains multiple distinct protease inhibitor domains. Probably has serine protease- and metalloprotease-inhibitor activity. The protein is WAP, Kazal, immunoglobulin, Kunitz and NTR domain-containing protein 1 (WFIKKN1) of Homo sapiens (Human).